A 664-amino-acid chain; its full sequence is Protein-arginine deiminase type-3 (664 aa).

This sequence belongs to the protein arginine deiminase family. It depends on Ca(2+) as a cofactor. In terms of tissue distribution, epidermis and hair follicles.

It is found in the cytoplasm. It catalyses the reaction L-arginyl-[protein] + H2O = L-citrullyl-[protein] + NH4(+). Functionally, catalyzes the deimination of arginine residues of proteins. This is Protein-arginine deiminase type-3 (Padi3) from Rattus norvegicus (Rat).